A 777-amino-acid chain; its full sequence is Histone-lysine N-methyltransferase set9 (777 aa).

The region spanning 117-231 (CPFEVNATNR…VGEEITVTYS (115 aa)) is the SET domain. Disordered regions lie at residues 263–414 (AVQK…ILSP) and 682–718 (RMGS…QGQY). The span at 291–301 (TALQASRTPSV) shows a compositional bias: polar residues. A compositionally biased stretch (low complexity) spans 323–337 (TSTTDSAAQGAGADG). 2 stretches are compositionally biased toward polar residues: residues 371-405 (TAPS…QGSE) and 688-698 (KQGSSAPSTKG).

Belongs to the class V-like SAM-binding methyltransferase superfamily. Histone-lysine methyltransferase family. Suvar4-20 subfamily.

It is found in the nucleus. The protein resides in the chromosome. The catalysed reaction is L-lysyl(20)-[histone H4] + 3 S-adenosyl-L-methionine = N(6),N(6),N(6)-trimethyl-L-lysyl(20)-[histone H4] + 3 S-adenosyl-L-homocysteine + 3 H(+). Histone methyltransferase that trimethylates 'Lys-20' of histone H4 to form H4K20me3. The protein is Histone-lysine N-methyltransferase set9 (hlm-1) of Neurospora crassa (strain ATCC 24698 / 74-OR23-1A / CBS 708.71 / DSM 1257 / FGSC 987).